The following is a 20-amino-acid chain: MVPYRNPRHQHVASVLRSGG.

Residues 1-11 (MVPYRNPRHQH) show a composition bias toward basic residues. Residues 1 to 20 (MVPYRNPRHQHVASVLRSGG) form a disordered region.

Functionally, involved in the transcriptional regulation of pufB. The protein is Transcriptional regulatory protein PufK (pufK) of Cereibacter sphaeroides (strain ATCC 17023 / DSM 158 / JCM 6121 / CCUG 31486 / LMG 2827 / NBRC 12203 / NCIMB 8253 / ATH 2.4.1.) (Rhodobacter sphaeroides).